We begin with the raw amino-acid sequence, 281 residues long: uncharacterized protein (281 aa).

This is an uncharacterized protein from Mycoplasma pneumoniae (strain ATCC 29342 / M129 / Subtype 1) (Mycoplasmoides pneumoniae).